The following is a 524-amino-acid chain: RNA-binding protein 39 (524 aa).

The interval 1 to 146 (MADDIDIEAM…PVREPIDNLT (146 aa)) is disordered. The residue at position 2 (alanine 2) is an N-acetylalanine. Residues 14–32 (PYKKDENKLSSANGHEERS) show a composition bias toward basic and acidic residues. 2 stretches are compositionally biased toward basic residues: residues 33 to 56 (KKRKKSKSRSRSHERKRSKSKERK) and 64 to 95 (KKSKSRERKRSRSKERRRSRSRSRDRRFRGRY). Position 95 is a phosphotyrosine (tyrosine 95). Serine 97 and serine 100 each carry phosphoserine. Lysine 111 is covalently cross-linked (Glycyl lysine isopeptide (Lys-Gly) (interchain with G-Cter in SUMO2)). Serine 117 is modified (phosphoserine). Residue lysine 119 forms a Glycyl lysine isopeptide (Lys-Gly) (interchain with G-Cter in SUMO2) linkage. Residues 119–130 (KLSRRRSRSKSP) show a composition bias toward basic residues. Phosphoserine occurs at positions 121 and 136. The span at 131-146 (FRKDKSPVREPIDNLT) shows a compositional bias: basic and acidic residues. A Phosphothreonine modification is found at threonine 146. In terms of domain architecture, RRM 1 spans 153–230 (RTVFCMQLAA…VPIIVQASQA (78 aa)). Residue lysine 244 forms a Glycyl lysine isopeptide (Lys-Gly) (interchain with G-Cter in SUMO2) linkage. The region spanning 250 to 328 (MRLYVGSLHF…RPMKVGHVTE (79 aa)) is the RRM 2 domain. Positions 291 to 355 (KGYGFITFSD…RTGIDLGTTG (65 aa)) are activating domain. Residues 291–400 (KGYGFITFSD…ADLQTRLSQQ (110 aa)) form an interaction with JUN region. Residues serine 334, serine 337, and serine 341 each carry the phosphoserine modification. The interaction with ESR1 and ESR2 stretch occupies residues 355-400 (GRLQLMARLAEGTGLQIPPAAQQALQMSGSLAFGAVADLQTRLSQQ). Residues 400–524 (QTEASALAAA…ATQLLVPSRR (125 aa)) form an interaction with NCOA6 region. An RRM 3 domain is found at 439–502 (EIKDDVIEEC…KMITAAYVPL (64 aa)).

The protein belongs to the splicing factor SR family. As to quaternary structure, interacts with NCOA6 and JUN. Interacts with ESR1 and ESR2, in the presence of estradiol (E2). Interacts with RSRC1 (via Arg/Ser-rich domain). Interacts with SF3B1. Interacts with ZNF106 (via N-terminus).

It localises to the nucleus speckle. Functionally, RNA-binding protein that acts as a pre-mRNA splicing factor. Acts by promoting exon inclusion via regulation of exon cassette splicing. Also acts as a transcriptional coactivator for steroid nuclear receptors ESR1/ER-alpha and ESR2/ER-beta, and JUN/AP-1, independently of the pre-mRNA splicing factor activity. This is RNA-binding protein 39 (RBM39) from Pongo abelii (Sumatran orangutan).